A 950-amino-acid chain; its full sequence is Protein lin-54 homolog (950 aa).

Disordered stretches follow at residues 1–63, 366–387, 500–523, 533–552, and 638–702; these read MDTS…DSLN, NASATSSTTHTTGGQTPSTSSG, ASKPASAASSSATPSASQELPRKH, KQSASVSSEASDSSDAGPEA, and VENK…LPPG. Positions 10–26 are enriched in acidic residues; the sequence is SLDDTEPLPELSFEDFL. A compositionally biased stretch (basic and acidic residues) spans 29–39; sequence TSEKSSQHMEI. Residues 40 to 55 are compositionally biased toward acidic residues; sequence EALDSEEDNIGGEDLA. 4 stretches are compositionally biased toward low complexity: residues 366–386, 500–516, 535–548, and 661–682; these read NASATSSTTHTTGGQTPSTSS, ASKPASAASSSATPSAS, SASVSSEASDSSDA, and QQQSKHQQLQAQAKQRIRQQQL. The 113-residue stretch at 737 to 849 folds into the CRC domain; sequence RRKHCNCSKS…KCVGCRNMED (113 aa).

This sequence belongs to the lin-54 family. Component of the DREAM complex at least composed of Myb, Caf1-55, mip40, mip120, mip130, E2f2, Dp, Rbf, Rbf2, lin-52, HDAC1/Rpd3 and l(3)mbt.

Its subcellular location is the nucleus. Functionally, component of the DREAM complex, a multiprotein complex that can both act as a transcription activator or repressor depending on the context. In follicle cells, the complex plays a central role in the site-specific DNA replication at the chorion loci. During development, the complex represses transcription of developmentally controlled E2F target genes. The polypeptide is Protein lin-54 homolog (mip120) (Drosophila melanogaster (Fruit fly)).